A 467-amino-acid polypeptide reads, in one-letter code: Ribulose bisphosphate carboxylase large chain (467 aa).

A propeptide spanning residues 1 to 2 (MS) is cleaved from the precursor. Proline 3 is modified (N-acetylproline). Lysine 14 is subject to N6,N6,N6-trimethyllysine. Substrate is bound by residues asparagine 123 and threonine 173. Catalysis depends on lysine 175, which acts as the Proton acceptor. Position 177 (lysine 177) interacts with substrate. Positions 201, 203, and 204 each coordinate Mg(2+). Lysine 201 carries the post-translational modification N6-carboxylysine. The active-site Proton acceptor is the histidine 294. Substrate contacts are provided by arginine 295, histidine 327, and serine 379.

It belongs to the RuBisCO large chain family. Type I subfamily. In terms of assembly, heterohexadecamer of 8 large chains and 8 small chains; disulfide-linked. The disulfide link is formed within the large subunit homodimers. Mg(2+) is required as a cofactor. In terms of processing, the disulfide bond which can form in the large chain dimeric partners within the hexadecamer appears to be associated with oxidative stress and protein turnover.

It is found in the plastid. The protein localises to the chloroplast. It catalyses the reaction 2 (2R)-3-phosphoglycerate + 2 H(+) = D-ribulose 1,5-bisphosphate + CO2 + H2O. The enzyme catalyses D-ribulose 1,5-bisphosphate + O2 = 2-phosphoglycolate + (2R)-3-phosphoglycerate + 2 H(+). RuBisCO catalyzes two reactions: the carboxylation of D-ribulose 1,5-bisphosphate, the primary event in carbon dioxide fixation, as well as the oxidative fragmentation of the pentose substrate in the photorespiration process. Both reactions occur simultaneously and in competition at the same active site. This chain is Ribulose bisphosphate carboxylase large chain, found in Phoenix reclinata (Senegal date palm).